Here is a 144-residue protein sequence, read N- to C-terminus: Cathelicidin-4 (144 aa).

A signal peptide spans 1-29; it reads MQTQRASLSLGRWSLWLLLLGLVVPSASA. Residues 30-130 constitute a propeptide that is removed on maturation; sequence QALSYREAVL…DLNCNELQSV (101 aa). Cystine bridges form between C85-C96 and C107-C124. An Arginine amide modification is found at R143.

The protein belongs to the cathelicidin family. Post-translationally, elastase might be responsible for its maturation. Large granules of neutrophils.

It localises to the secreted. Functionally, potent microbicidal activity; active against S.aureus and E.coli. This chain is Cathelicidin-4 (CATHL4), found in Bos taurus (Bovine).